The chain runs to 306 residues: D-alanine--D-alanine ligase (306 aa).

In terms of domain architecture, ATP-grasp spans 101 to 303 (KQVWQAVGLP…FSQLVVKILE (203 aa)). 134–189 (FTHLGLPLIVKPSREGSSVGMSKVNTLSELPAALEEAFRHDDDILVEKWLSGPEYT) serves as a coordination point for ATP. Residues Asp-257, Glu-270, and Asn-272 each coordinate Mg(2+).

It belongs to the D-alanine--D-alanine ligase family. The cofactor is Mg(2+). Requires Mn(2+) as cofactor.

It is found in the cytoplasm. The enzyme catalyses 2 D-alanine + ATP = D-alanyl-D-alanine + ADP + phosphate + H(+). It participates in cell wall biogenesis; peptidoglycan biosynthesis. In terms of biological role, cell wall formation. The protein is D-alanine--D-alanine ligase of Pectobacterium carotovorum subsp. carotovorum (strain PC1).